The chain runs to 745 residues: Double-stranded RNA-specific editase B2 (745 aa).

Disordered stretches follow at residues 1–35 and 50–104; these read MASVLGSGRGSGGLSSQLKCKSKRRRRRRSKRKDK and SPGT…PLEE. Basic residues predominate over residues 20 to 34; the sequence is CKSKRRRRRRSKRKD. An R-domain (ssRNA-binding) region spans residues 23–35; sequence KRRRRRRSKRKDK. DRBM domains follow at residues 125–191 and 283–347; these read TPKN…SFVQ and NPVV…ALFD. The A to I editase domain occupies 414–741; sequence VLSSGTKCIS…VRKPPEQDQF (328 aa). Histidine 438 provides a ligand contact to Zn(2+). Glutamate 440 functions as the Proton donor in the catalytic mechanism. The Zn(2+) site is built by cysteine 496 and cysteine 561.

As to expression, brain specific.

It localises to the nucleus. Its function is as follows. Lacks editing activity. It prevents the binding of other ADAR enzymes to targets in vitro, and decreases the efficiency of these enzymes. Capable of binding to dsRNA but also to ssRNA. This is Double-stranded RNA-specific editase B2 (Adarb2) from Mus musculus (Mouse).